Consider the following 427-residue polypeptide: 3-phosphoshikimate 1-carboxyvinyltransferase (427 aa).

The 3-phosphoshikimate site is built by lysine 20, serine 21, and arginine 25. A phosphoenolpyruvate-binding site is contributed by lysine 20. Positions 92 and 120 each coordinate phosphoenolpyruvate. 3-phosphoshikimate is bound by residues serine 166, glutamine 168, aspartate 312, and lysine 339. Glutamine 168 is a binding site for phosphoenolpyruvate. The active-site Proton acceptor is the aspartate 312. Residues arginine 343 and arginine 385 each coordinate phosphoenolpyruvate.

This sequence belongs to the EPSP synthase family. As to quaternary structure, monomer.

The protein resides in the cytoplasm. It catalyses the reaction 3-phosphoshikimate + phosphoenolpyruvate = 5-O-(1-carboxyvinyl)-3-phosphoshikimate + phosphate. It participates in metabolic intermediate biosynthesis; chorismate biosynthesis; chorismate from D-erythrose 4-phosphate and phosphoenolpyruvate: step 6/7. Its function is as follows. Catalyzes the transfer of the enolpyruvyl moiety of phosphoenolpyruvate (PEP) to the 5-hydroxyl of shikimate-3-phosphate (S3P) to produce enolpyruvyl shikimate-3-phosphate and inorganic phosphate. The sequence is that of 3-phosphoshikimate 1-carboxyvinyltransferase from Streptococcus pyogenes serotype M49 (strain NZ131).